The following is a 430-amino-acid chain: Glutamyl-tRNA reductase (430 aa).

Residues 50 to 53 (TCNR), Ser-108, 113 to 115 (EPQ), and Gln-119 contribute to the substrate site. The active-site Nucleophile is the Cys-51. 188–193 (GAGEMA) is a binding site for NADP(+).

Belongs to the glutamyl-tRNA reductase family. Homodimer.

The catalysed reaction is (S)-4-amino-5-oxopentanoate + tRNA(Glu) + NADP(+) = L-glutamyl-tRNA(Glu) + NADPH + H(+). It functions in the pathway porphyrin-containing compound metabolism; protoporphyrin-IX biosynthesis; 5-aminolevulinate from L-glutamyl-tRNA(Glu): step 1/2. Its function is as follows. Catalyzes the NADPH-dependent reduction of glutamyl-tRNA(Glu) to glutamate 1-semialdehyde (GSA). The protein is Glutamyl-tRNA reductase of Desulfovibrio desulfuricans (strain ATCC 27774 / DSM 6949 / MB).